The chain runs to 172 residues: Diphosphoinositol polyphosphate phosphohydrolase 1 (172 aa).

At methionine 1 the chain carries N-acetylmethionine. Residues arginine 10, 18-20, and 39-41 contribute to the substrate site; these read KKR and SSR. The region spanning 17 to 144 is the Nudix hydrolase domain; it reads YKKRAACLCF…VQASYFETLR (128 aa). Positions 50 and 66 each coordinate Mg(2+). A Nudix box motif is present at residues 51–72; that stretch reads GGMEPEEEPGTAAVREVCEEAG. Glutamate 69 functions as the Proton acceptor in the catalytic mechanism. Glutamate 70 is a Mg(2+) binding site. Residues 89 to 91, arginine 115, and lysine 133 contribute to the substrate site; that span reads RKH.

It belongs to the Nudix hydrolase family. DIPP subfamily. In terms of assembly, monomer. The cofactor is Mg(2+). Mn(2+) is required as a cofactor. Requires Zn(2+) as cofactor.

It localises to the cytoplasm. The protein localises to the nucleus. It carries out the reaction diphospho-myo-inositol polyphosphate + H2O = myo-inositol polyphosphate + phosphate.. The enzyme catalyses 5-diphospho-1D-myo-inositol 1,2,3,4,6-pentakisphosphate + H2O = 1D-myo-inositol hexakisphosphate + phosphate + H(+). It catalyses the reaction 3,5-bis(diphospho)-1D-myo-inositol 1,2,4,6-tetrakisphosphate + H2O = 3-diphospho-1D-myo-inositol 1,2,4,5,6-pentakisphosphate + phosphate + 2 H(+). The catalysed reaction is [phosphate](n+1) + n H2O = (n+1) phosphate + n H(+). It carries out the reaction P(1),P(5)-bis(5'-adenosyl) pentaphosphate + H2O = ADP + ATP + 2 H(+). The enzyme catalyses P(1),P(6)-bis(5'-adenosyl) hexaphosphate + H2O = 2 ATP + 2 H(+). It catalyses the reaction P(1),P(4)-bis(5'-adenosyl) tetraphosphate + H2O = AMP + ATP + 2 H(+). The catalysed reaction is a 5'-end (N(7)-methyl 5'-triphosphoguanosine)-ribonucleoside in mRNA + H2O = N(7)-methyl-GMP + a 5'-end diphospho-ribonucleoside in mRNA + 2 H(+). It carries out the reaction a 5'-end (N(7)-methyl 5'-triphosphoguanosine)-ribonucleoside in mRNA + H2O = N(7)-methyl-GDP + a 5'-end phospho-ribonucleoside in mRNA + 2 H(+). In terms of biological role, cleaves a beta-phosphate from the diphosphate groups in PP-InsP5 (diphosphoinositol pentakisphosphate) and [PP]2-InsP4 (bisdiphosphoinositol tetrakisphosphate), suggesting that it may play a role in signal transduction. InsP6 (inositol hexakisphosphate) is not a substrate. Also able to catalyze the hydrolysis of dinucleoside oligophosphates, with diadenosine 5',5'''-P1,P6-hexaphosphate (Ap6A) and diadenosine 5',5'''- P1,P5-pentaphosphate (Ap5A) being the preferred substrates. The major reaction products are ADP and p4a from Ap6A and ADP and ATP from Ap5A. Also able to hydrolyze 5- phosphoribose 1-diphosphate. Acts as a decapping enzyme that can hydrolyze both monomethylated and unmethylated capped RNAs. Hydrolyzes monomethylated capped RNA after both the alpha- and beta-phosphates generating m7GMP + ppRNA and m7GDP + pRNA. Modulates the stability of a subset of mRNAs implicated in cell motility. Divalent cations zinc, magnesium and manganese determine its substrate specificity. Exhibits diphosphoinositol polyphosphate phosphohydrolase in the presence of magnesium ions, diadenosine hexaphosphate hydrolase activity in the presence of manganese ions and endopolyphosphatase activity in the presence of zinc ions. Plays an important role in limiting DNA damage and maintaining cell survival upon oxidative stress via its endopolyphosphatase activity. The chain is Diphosphoinositol polyphosphate phosphohydrolase 1 from Bos taurus (Bovine).